A 28-amino-acid polypeptide reads, in one-letter code: Cyclotide vodo I1 (28 aa).

3 disulfide bridges follow: C4–C18, C8–C20, and C13–C25.

Post-translationally, this is a cyclic peptide. Contains 3 disulfide bonds.

In terms of biological role, probably participates in a plant defense mechanism. The sequence is that of Cyclotide vodo I1 from Viola odorata (Sweet violet).